The following is a 455-amino-acid chain: Growth/differentiation factor 9 (455 aa).

Positions 1–24 are cleaved as a signal peptide; that stretch reads MALPNKFLLWFYCFAWLCFPVSLG. The propeptide occupies 25–320; it reads SQASGGDAQI…GRSSHHRHRR (296 aa). N-linked (GlcNAc...) asparagine glycosylation is found at asparagine 106, asparagine 163, asparagine 236, asparagine 255, and asparagine 269. The disordered stretch occupies residues 305-328; the sequence is EDAAEDGRSSHHRHRRGQETVSSE. Asparagine 339 carries N-linked (GlcNAc...) asparagine glycosylation. 3 cysteine pairs are disulfide-bonded: cysteine 354–cysteine 420, cysteine 383–cysteine 452, and cysteine 387–cysteine 454.

This sequence belongs to the TGF-beta family. Homodimer or heterodimer (Potential). But, in contrast to other members of this family, cannot be disulfide-linked. Post-translationally, phosphorylated; phosphorylation is critical for GDF9 function.

It is found in the secreted. Required for ovarian folliculogenesis. This Papio anubis (Olive baboon) protein is Growth/differentiation factor 9 (GDF9).